Consider the following 1192-residue polypeptide: Plakophilin-4 (1192 aa).

Residues 1 to 31 (MPAPEQASLVEEGQPQTRQEAASTGPGMEPE) are disordered. A coiled-coil region spans residues 36 to 70 (TILASVKEQELQFQRLTRELEVERQIVASQLERCR). The interval 73–262 (AESPSIASTS…PRPLNPSAYS (190 aa)) is disordered. At serine 75 the chain carries Phosphoserine. Polar residues predominate over residues 77-86 (SIASTSSTEK). Threonine 84 carries the phosphothreonine modification. Residues serine 106, serine 132, serine 136, and serine 139 each carry the phosphoserine modification. Polar residues-rich tracts occupy residues 138–156 (GSLGNSRSSTQMNSYSDSG), 163–204 (FHNS…QPSV), and 214–230 (SVPSRAQSPSYVISTGV). Serine 221, serine 231, and serine 236 each carry phosphoserine. Over residues 231 to 242 (SPSRGSLRTSLG) the composition is skewed to low complexity. 2 positions are modified to omega-N-methylarginine: arginine 254 and arginine 270. Serine 273 and serine 281 each carry phosphoserine. A disordered region spans residues 290-310 (SVTSRQTSNPNGPTPQYQTTA). Phosphoserine is present on residues serine 314, serine 327, and serine 337. A disordered region spans residues 323 to 348 (TRVASPSQGQVGSSSPKRSGMTAVPQ). Low complexity predominate over residues 325–338 (VASPSQGQVGSSSP). Tyrosine 372 is modified (phosphotyrosine). Phosphoserine is present on residues serine 392, serine 403, and serine 406. Residue threonine 412 is modified to Phosphothreonine. Phosphotyrosine is present on tyrosine 415. An ARM 1 repeat occupies 415–455 (YEGRTYYSPVYRSPNHGTVELQGSQTALYRTGSVGIGNLQR). Phosphoserine is present on residues serine 422, serine 427, and serine 438. At tyrosine 478 the chain carries Phosphotyrosine. A phosphoserine mark is found at serine 510, serine 512, and serine 515. 5 ARM repeats span residues 518–557 (KDPREFAWRDPELPEVIHMLQHQFPSVQANAAAYLQHLCF), 560–599 (NKVKMEVCRLGGIKHLVDLLDHRVLEVQKNACGALRNLVF), 604–644 (DENK…NLSS), 660–702 (LTNT…NLSS), and 706–751 (EARK…NLSY). The segment covering 773 to 782 (GKESPSKDSE) has biased composition (basic and acidic residues). The disordered stretch occupies residues 773-810 (GKESPSKDSEPSCWGKKKKKKKRTPQEDQWDGVGPIPG). Serine 776 is subject to Phosphoserine. 3 ARM repeats span residues 815 to 855 (PKGV…NLSA), 862 to 901 (AYIRAAVRKEKGLPILVELLRMDNDRVVSSVATALRNMAL), and 950 to 993 (MENA…TLWQ). Phosphothreonine occurs at positions 1013 and 1017. The residue at position 1045 (serine 1045) is a Phosphoserine. Positions 1058 to 1086 (PRSEYDRTQPPMQYYNSQGDATHKGLYPG) are disordered. Over residues 1067-1077 (PPMQYYNSQGD) the composition is skewed to polar residues. Serine 1091, serine 1100, and serine 1135 each carry phosphoserine.

Belongs to the beta-catenin family. As to quaternary structure, interacts with PDZD2. Interacts (via the C-terminus) with FRMPD2 (via the PDZ 2 domain). Interacts with RHOA; the interaction is detected at the midbody. Interacts with ECT2; the interaction is detected at the midbody. Interacts with CCDC85B. Expressed in salivary glands (at protein level). Expressed in arrector pili muscle (at protein level).

The protein resides in the cell junction. The protein localises to the desmosome. It localises to the cytoplasm. Its subcellular location is the cytoskeleton. It is found in the spindle. The protein resides in the midbody. The protein localises to the cell membrane. Functionally, plays a role as a regulator of Rho activity during cytokinesis. May play a role in junctional plaques. The polypeptide is Plakophilin-4 (PKP4) (Homo sapiens (Human)).